We begin with the raw amino-acid sequence, 166 residues long: Small ribosomal subunit protein uS5 (166 aa).

The S5 DRBM domain maps to 12-75 (YIEKLVQVNR…EAARRNMIQV (64 aa)).

This sequence belongs to the universal ribosomal protein uS5 family. As to quaternary structure, part of the 30S ribosomal subunit. Contacts proteins S4 and S8.

Functionally, with S4 and S12 plays an important role in translational accuracy. In terms of biological role, located at the back of the 30S subunit body where it stabilizes the conformation of the head with respect to the body. This is Small ribosomal subunit protein uS5 from Pseudomonas putida (strain ATCC 700007 / DSM 6899 / JCM 31910 / BCRC 17059 / LMG 24140 / F1).